The following is a 142-amino-acid chain: Endoribonuclease YbeY (142 aa).

Positions 107, 111, and 117 each coordinate Zn(2+).

It belongs to the endoribonuclease YbeY family. The cofactor is Zn(2+).

The protein resides in the cytoplasm. Single strand-specific metallo-endoribonuclease involved in late-stage 70S ribosome quality control and in maturation of the 3' terminus of the 16S rRNA. In Chlorobium phaeobacteroides (strain DSM 266 / SMG 266 / 2430), this protein is Endoribonuclease YbeY.